We begin with the raw amino-acid sequence, 409 residues long: Elongation factor Tu (409 aa).

The region spanning 10–214 (KPHVNIGTIG…AVDSYIPDPE (205 aa)) is the tr-type G domain. The tract at residues 19-26 (GHVDHGKT) is G1. GTP is bound at residue 19-26 (GHVDHGKT). A Mg(2+)-binding site is contributed by Thr26. The interval 60–64 (GITIN) is G2. The tract at residues 81–84 (DCPG) is G3. GTP-binding positions include 81–85 (DCPGH) and 136–139 (NKED). The tract at residues 136 to 139 (NKED) is G4. Residues 174 to 176 (SGL) are G5.

Belongs to the TRAFAC class translation factor GTPase superfamily. Classic translation factor GTPase family. EF-Tu/EF-1A subfamily. Monomer.

Its subcellular location is the cytoplasm. It catalyses the reaction GTP + H2O = GDP + phosphate + H(+). GTP hydrolase that promotes the GTP-dependent binding of aminoacyl-tRNA to the A-site of ribosomes during protein biosynthesis. The sequence is that of Elongation factor Tu from Trichormus variabilis (strain ATCC 29413 / PCC 7937) (Anabaena variabilis).